We begin with the raw amino-acid sequence, 150 residues long: Soluble pyridine nucleotide transhydrogenase (150 aa).

It belongs to the class-I pyridine nucleotide-disulfide oxidoreductase family. The cofactor is FAD.

The protein resides in the cytoplasm. It carries out the reaction NAD(+) + NADPH = NADH + NADP(+). In terms of biological role, conversion of NADPH, generated by peripheral catabolic pathways, to NADH, which can enter the respiratory chain for energy generation. The chain is Soluble pyridine nucleotide transhydrogenase (sthA) from Pectobacterium carotovorum subsp. carotovorum (Erwinia carotovora subsp. carotovora).